The primary structure comprises 68 residues: Conotoxin Lp5.2 (68 aa).

Residues 1–19 (MRCVPVFIILLLLASPAAP) form the signal peptide. Residues 20–54 (KSLETRIQNDLIRAGLTDADLKTEKGFLSGLLNVA) constitute a propeptide that is removed on maturation.

This sequence belongs to the conotoxin T superfamily. Post-translationally, contains 2 disulfide bonds that can be either 'C1-C3, C2-C4' or 'C1-C4, C2-C3', since these disulfide connectivities have been observed for conotoxins with cysteine framework V (for examples, see AC P0DQQ7 and AC P81755). In terms of tissue distribution, expressed by the venom duct.

It localises to the secreted. In Conus leopardus (Leopard cone), this protein is Conotoxin Lp5.2.